Consider the following 533-residue polypeptide: D-2-hydroxyglutarate dehydrogenase, mitochondrial (533 aa).

The transit peptide at methionine 1–glycine 55 directs the protein to the mitochondrion. The FAD-binding PCMH-type domain occupies valine 107–lysine 286. Positions 397, 401, and 412 each coordinate (R)-2-hydroxyglutarate. Arginine 397 serves as a coordination point for (R)-lactate. Positions 397, 401, and 412 each coordinate (R)-malate. Zn(2+) is bound by residues histidine 445 and histidine 452. Asparagine 454 provides a ligand contact to (R)-2-hydroxyglutarate. Residue glutamate 486 participates in Zn(2+) binding. Histidine 487 provides a ligand contact to (R)-2-hydroxyglutarate. Histidine 487 provides a ligand contact to (R)-lactate. Histidine 487 serves as a coordination point for (R)-malate.

It belongs to the FAD-binding oxidoreductase/transferase type 4 family. The cofactor is FAD.

It localises to the mitochondrion. It carries out the reaction (R)-2-hydroxyglutarate + A = 2-oxoglutarate + AH2. The enzyme catalyses (R)-malate + A = oxaloacetate + AH2. Its function is as follows. Catalyzes the oxidation of D-2-hydroxyglutarate (D-2-HG) to alpha-ketoglutarate. Also catalyzes the oxidation of other D-2-hydroxyacids, such as D-malate (D-MAL) and D-lactate (D-LAC). Exhibits high activities towards D-2-HG and D-MAL but a very weak activity towards D-LAC. The chain is D-2-hydroxyglutarate dehydrogenase, mitochondrial (d2hgdh) from Danio rerio (Zebrafish).